The primary structure comprises 204 residues: Large ribosomal subunit protein bL25 (204 aa).

This sequence belongs to the bacterial ribosomal protein bL25 family. CTC subfamily. As to quaternary structure, part of the 50S ribosomal subunit; part of the 5S rRNA/L5/L18/L25 subcomplex. Contacts the 5S rRNA. Binds to the 5S rRNA independently of L5 and L18.

Its function is as follows. This is one of the proteins that binds to the 5S RNA in the ribosome where it forms part of the central protuberance. In Pseudomonas paraeruginosa (strain DSM 24068 / PA7) (Pseudomonas aeruginosa (strain PA7)), this protein is Large ribosomal subunit protein bL25.